Here is a 154-residue protein sequence, read N- to C-terminus: Small ribosomal subunit protein uS19 (154 aa).

The protein belongs to the universal ribosomal protein uS19 family.

The protein is Small ribosomal subunit protein uS19 (RPS15) of Oryza sativa subsp. japonica (Rice).